The primary structure comprises 462 residues: UDP-N-acetylmuramoylalanine--D-glutamate ligase (462 aa).

111–117 is an ATP binding site; sequence GTNGKTT.

This sequence belongs to the MurCDEF family.

It localises to the cytoplasm. The enzyme catalyses UDP-N-acetyl-alpha-D-muramoyl-L-alanine + D-glutamate + ATP = UDP-N-acetyl-alpha-D-muramoyl-L-alanyl-D-glutamate + ADP + phosphate + H(+). It functions in the pathway cell wall biogenesis; peptidoglycan biosynthesis. Functionally, cell wall formation. Catalyzes the addition of glutamate to the nucleotide precursor UDP-N-acetylmuramoyl-L-alanine (UMA). This Trichodesmium erythraeum (strain IMS101) protein is UDP-N-acetylmuramoylalanine--D-glutamate ligase.